Consider the following 780-residue polypeptide: Nuclear cap-binding protein subunit 1 (780 aa).

A disordered region spans residues 1–25; sequence MSSYRGSTRPRKRTREGENYGFRPH. S29 bears the Phosphoserine mark. An MIF4G domain is found at 34 to 249; sequence AARIKKDITF…KQLILSREND (216 aa). A disordered region spans residues 738–780; the sequence is ANEPVQENTSEEQEDTKMQPVDAVDEQPSENNQTAADATNEEK.

The protein belongs to the NCBP1 family. Component of the nuclear cap-binding complex (CBC), a heterodimer composed of cbc1 and cbc2 that interacts with capped RNAs.

Its subcellular location is the cytoplasm. The protein localises to the perinuclear region. The protein resides in the nucleus. Its function is as follows. Component of the CBC complex, which binds cotranscriptionally to the 5'-cap of pre-mRNAs and is involved in maturation, export and degradation of nuclear mRNAs. The chain is Nuclear cap-binding protein subunit 1 (cbc1) from Schizosaccharomyces pombe (strain 972 / ATCC 24843) (Fission yeast).